Here is a 907-residue protein sequence, read N- to C-terminus: Probable disease resistance protein At1g58390 (907 aa).

Residues 144 to 456 (QGDRQREMRQ…AEGISTAEDY (313 aa)) form the NB-ARC domain. 190–197 (GMGGLGKT) is a binding site for ATP. LRR repeat units lie at residues 608–631 (LIHL…LGNL) and 843–868 (MPLL…RFIY).

Belongs to the disease resistance NB-LRR family.

In terms of biological role, possible disease resistance protein. This is Probable disease resistance protein At1g58390 from Arabidopsis thaliana (Mouse-ear cress).